The sequence spans 294 residues: uncharacterized protein (294 aa).

The disordered stretch occupies residues 1-215 (MTTAITPDKK…DQDDDDQKDL (215 aa)). Basic residues-rich tracts occupy residues 27 to 43 (TKPR…KSKK) and 50 to 78 (AKKR…KKAP). A compositionally biased stretch (low complexity) spans 79–88 (MKAPSKPAAK). Polar residues predominate over residues 92-102 (QQAQASLQKPI). Residues 118–136 (PRPPTPIPPTGVKPEPAPR) are compositionally biased toward pro residues. Positions 145-160 (SVSSTTPRTSATTGTT) are enriched in low complexity.

This is an uncharacterized protein from Caenorhabditis elegans.